The primary structure comprises 175 residues: ADP-ribosylation factor 6 (175 aa).

Glycine 2 carries the N-myristoyl glycine lipid modification. A lipid anchor (N6-myristoyl lysine) is attached at lysine 3. GTP contacts are provided by residues 23-28 (AAGKTT), 41-44 (TIPT), 63-67 (DVGGQ), 122-125 (NKQD), and 155-156 (CA).

This sequence belongs to the small GTPase superfamily. Arf family.

It is found in the cytoplasm. The protein resides in the cytosol. Its subcellular location is the cell membrane. The protein localises to the endosome membrane. It localises to the recycling endosome membrane. It is found in the cell projection. The protein resides in the filopodium membrane. Its subcellular location is the ruffle. The protein localises to the cleavage furrow. It localises to the midbody. It is found in the midbody ring. It catalyses the reaction GTP + H2O = GDP + phosphate + H(+). GTP-binding protein involved in protein trafficking; regulates endocytic recycling and cytoskeleton remodeling. May modulate vesicle budding and uncoating within the Golgi apparatus. May contribute to the regulation of dendritic branching, filopodia extension and dendritic spine development. The sequence is that of ADP-ribosylation factor 6 (ARF6) from Gallus gallus (Chicken).